The sequence spans 157 residues: 2-C-methyl-D-erythritol 2,4-cyclodiphosphate synthase (157 aa).

Residues Asp8 and His10 each contribute to the a divalent metal cation site. 4-CDP-2-C-methyl-D-erythritol 2-phosphate is bound by residues 8 to 10 (DVH) and 34 to 35 (HS). His42 is a binding site for a divalent metal cation. 4-CDP-2-C-methyl-D-erythritol 2-phosphate is bound by residues 56-58 (DIG), 61-65 (FPDTD), 100-106 (AQRPKMA), 132-135 (TTTE), Phe139, and Arg142.

Belongs to the IspF family. In terms of assembly, homotrimer. Requires a divalent metal cation as cofactor.

It catalyses the reaction 4-CDP-2-C-methyl-D-erythritol 2-phosphate = 2-C-methyl-D-erythritol 2,4-cyclic diphosphate + CMP. It participates in isoprenoid biosynthesis; isopentenyl diphosphate biosynthesis via DXP pathway; isopentenyl diphosphate from 1-deoxy-D-xylulose 5-phosphate: step 4/6. Its function is as follows. Involved in the biosynthesis of isopentenyl diphosphate (IPP) and dimethylallyl diphosphate (DMAPP), two major building blocks of isoprenoid compounds. Catalyzes the conversion of 4-diphosphocytidyl-2-C-methyl-D-erythritol 2-phosphate (CDP-ME2P) to 2-C-methyl-D-erythritol 2,4-cyclodiphosphate (ME-CPP) with a corresponding release of cytidine 5-monophosphate (CMP). The sequence is that of 2-C-methyl-D-erythritol 2,4-cyclodiphosphate synthase from Geobacter sulfurreducens (strain ATCC 51573 / DSM 12127 / PCA).